The primary structure comprises 319 residues: 12-(S)-hydroxy-5,8,10,14-eicosatetraenoic acid receptor (319 aa).

At 1–16 (MPFPNCSAPSTVVATA) the chain is on the extracellular side. An N-linked (GlcNAc...) asparagine glycan is attached at Asn-5. The helical transmembrane segment at 17 to 37 (VGVLLGLECGLGLLGNAVALW) threads the bilayer. At 38 to 52 (TFLFRVRVWKPYAVY) the chain is on the cytoplasmic side. A helical transmembrane segment spans residues 53–73 (LLNLALADLLLAACLPFLAAF). Topologically, residues 74-91 (YLSLQAWHLGRVGCWALH) are extracellular. The chain crosses the membrane as a helical span at residues 92–110 (FLLDLSRSVGMAFLAAVAL). Residues 111–131 (DRYLRVVHPRLKVNLLSPQAA) lie on the Cytoplasmic side of the membrane. Residues 132–152 (LGVSGLVWLLMVALTCPGLLI) form a helical membrane-spanning segment. The Extracellular portion of the chain corresponds to 153–180 (SEAAQNSTRCHSFYSRADGSFSIIWQEA). Residues 181–201 (LSCLQFVLPFGLIVFCNAGII) form a helical membrane-spanning segment. Over 202–219 (RALQKRLREPEKQPKLQR) the chain is Cytoplasmic. Residues 220–240 (AQALVTLVVVLFALCFLPCFL) traverse the membrane as a helical segment. Over 241–265 (ARVLMHIFQNLGSCRALCAVAHTSD) the chain is Extracellular. A helical transmembrane segment spans residues 266–284 (VTGSLTYLHSVLNPVVYCF). Topologically, residues 285-319 (SSPTFRSSYRRVFHTLRGKGQAAEPPDFNPRDSYS) are cytoplasmic.

This sequence belongs to the G-protein coupled receptor 1 family. In terms of assembly, interacts with KRAS; in a farnesylation-dependent manner.

The protein resides in the cell membrane. Its function is as follows. High-affinity receptor for 12-(S)-hydroxy-5,8,10,14-eicosatetraenoic acid (12-S-HETE), with much lower affinities for other HETE isomers. 12-S-HETE is a eicosanoid, a 12-lipoxygenase (ALOX12) metabolite of arachidonic acid, involved in many physiologic and pathologic processes. 12-S-HETE-binding leads to activation of ERK1/2 (MAPK3/MAPK1), MEK, and NF-kappa-B pathways leading to cell growth. Plays a crucial role for proliferation, survival and macropinocytosis of KRAS-dependent cancer cells by mediating the translocation of KRAS from the endoplasmic reticulum to the plasma membrane (PM) and its association with the PM. Contributes to enhanced immune responses by inducing dendrite protrusion of small intestinal CX3CR1(+) phagocytes for the uptake of luminal antigens. Acts also as a key receptor for 12-(S)-HETE-mediated liver ischemia reperfusion injury. Functionally, proton-sensing G protein-coupled receptor. The sequence is that of 12-(S)-hydroxy-5,8,10,14-eicosatetraenoic acid receptor (GPR31) from Homo sapiens (Human).